Consider the following 185-residue polypeptide: dCTP deaminase (185 aa).

DCTP is bound by residues 108–113 (KSTYAR), 132–134 (TLE), glutamine 153, tyrosine 167, and glutamine 177. Glutamate 134 (proton donor/acceptor) is an active-site residue.

Belongs to the dCTP deaminase family. As to quaternary structure, homotrimer.

It carries out the reaction dCTP + H2O + H(+) = dUTP + NH4(+). It functions in the pathway pyrimidine metabolism; dUMP biosynthesis; dUMP from dCTP (dUTP route): step 1/2. Its function is as follows. Catalyzes the deamination of dCTP to dUTP. The sequence is that of dCTP deaminase from Pelagibacter ubique (strain HTCC1062).